Reading from the N-terminus, the 387-residue chain is Putative serine/threonine-protein kinase (387 aa).

The region spanning 15–344 (YQIEKLLNRG…ERVLEGQVEI (330 aa)) is the Protein kinase domain. ATP-binding positions include 21-29 (LNRGGMDSY) and lysine 55. Catalysis depends on aspartate 164, which acts as the Proton acceptor. Helical transmembrane passes span 232 to 252 (PPNA…MLVG) and 363 to 383 (SIFT…LLIF).

It belongs to the protein kinase superfamily. Ser/Thr protein kinase family.

Its subcellular location is the cell membrane. The enzyme catalyses L-seryl-[protein] + ATP = O-phospho-L-seryl-[protein] + ADP + H(+). It carries out the reaction L-threonyl-[protein] + ATP = O-phospho-L-threonyl-[protein] + ADP + H(+). This chain is Putative serine/threonine-protein kinase, found in Mycoplasma genitalium (strain ATCC 33530 / DSM 19775 / NCTC 10195 / G37) (Mycoplasmoides genitalium).